The following is a 160-amino-acid chain: Crossover junction endodeoxyribonuclease RuvC (160 aa).

Residues D7, E70, and D142 contribute to the active site. Residues D7, E70, and D142 each contribute to the Mg(2+) site.

This sequence belongs to the RuvC family. In terms of assembly, homodimer which binds Holliday junction (HJ) DNA. The HJ becomes 2-fold symmetrical on binding to RuvC with unstacked arms; it has a different conformation from HJ DNA in complex with RuvA. In the full resolvosome a probable DNA-RuvA(4)-RuvB(12)-RuvC(2) complex forms which resolves the HJ. Requires Mg(2+) as cofactor.

It is found in the cytoplasm. It catalyses the reaction Endonucleolytic cleavage at a junction such as a reciprocal single-stranded crossover between two homologous DNA duplexes (Holliday junction).. Its function is as follows. The RuvA-RuvB-RuvC complex processes Holliday junction (HJ) DNA during genetic recombination and DNA repair. Endonuclease that resolves HJ intermediates. Cleaves cruciform DNA by making single-stranded nicks across the HJ at symmetrical positions within the homologous arms, yielding a 5'-phosphate and a 3'-hydroxyl group; requires a central core of homology in the junction. The consensus cleavage sequence is 5'-(A/T)TT(C/G)-3'. Cleavage occurs on the 3'-side of the TT dinucleotide at the point of strand exchange. HJ branch migration catalyzed by RuvA-RuvB allows RuvC to scan DNA until it finds its consensus sequence, where it cleaves and resolves the cruciform DNA. The polypeptide is Crossover junction endodeoxyribonuclease RuvC (Ehrlichia ruminantium (strain Welgevonden)).